The following is a 194-amino-acid chain: MALVPMVIEQTSRGERSYDIYSRLLKERVIFLSGEVEDNMANLIVAQLLFLESEDPDKDINLYINSPGGSVTAGMAIYDTMQFIKPDVRTLCIGQACSMGAFLLAGGAAGKRAALPNARVMIHQPLGGFRGQASDIQIHAQEILKIKHTLNERLAFHSGQPLEQIEKDTDRDNFMSAEEAQNYGLIDSVLVKRS.

S98 acts as the Nucleophile in catalysis. Residue H123 is part of the active site.

The protein belongs to the peptidase S14 family. In terms of assembly, fourteen ClpP subunits assemble into 2 heptameric rings which stack back to back to give a disk-like structure with a central cavity, resembling the structure of eukaryotic proteasomes.

It localises to the cytoplasm. The enzyme catalyses Hydrolysis of proteins to small peptides in the presence of ATP and magnesium. alpha-casein is the usual test substrate. In the absence of ATP, only oligopeptides shorter than five residues are hydrolyzed (such as succinyl-Leu-Tyr-|-NHMec, and Leu-Tyr-Leu-|-Tyr-Trp, in which cleavage of the -Tyr-|-Leu- and -Tyr-|-Trp bonds also occurs).. In terms of biological role, cleaves peptides in various proteins in a process that requires ATP hydrolysis. Has a chymotrypsin-like activity. Plays a major role in the degradation of misfolded proteins. This is ATP-dependent Clp protease proteolytic subunit from Actinobacillus succinogenes (strain ATCC 55618 / DSM 22257 / CCUG 43843 / 130Z).